Reading from the N-terminus, the 615-residue chain is Probable ATP-citrate synthase subunit 1 (615 aa).

Residues 221-241 (LIRFEADPACKLMVLLGEVGG) and 272-298 (FKTEVQFGHAGSFANSELETAVAKNQA) each bind ATP. A Mg(2+)-binding site is contributed by Glu238. Catalysis depends on His280, which acts as the Tele-phosphohistidine intermediate. 299–309 (MREAGIYVPET) serves as a coordination point for CoA. Position 359 is a phosphoserine (Ser359).

The protein belongs to the succinate/malate CoA ligase alpha subunit family. In terms of assembly, composed of two subunits.

Its subcellular location is the cytoplasm. The catalysed reaction is oxaloacetate + acetyl-CoA + ADP + phosphate = citrate + ATP + CoA. Catalyzes the formation of cytosolic acetyl-CoA, which is mainly used for the biosynthesis of fatty acids and sterols. This Schizosaccharomyces pombe (strain 972 / ATCC 24843) (Fission yeast) protein is Probable ATP-citrate synthase subunit 1.